The sequence spans 427 residues: Serine hydroxymethyltransferase (427 aa).

Residues Leu124 and 128–130 each bind (6S)-5,6,7,8-tetrahydrofolate; that span reads GHL. Lys233 bears the N6-(pyridoxal phosphate)lysine mark.

The protein belongs to the SHMT family. As to quaternary structure, homodimer. The cofactor is pyridoxal 5'-phosphate.

The protein localises to the cytoplasm. It carries out the reaction (6R)-5,10-methylene-5,6,7,8-tetrahydrofolate + glycine + H2O = (6S)-5,6,7,8-tetrahydrofolate + L-serine. The protein operates within one-carbon metabolism; tetrahydrofolate interconversion. It functions in the pathway amino-acid biosynthesis; glycine biosynthesis; glycine from L-serine: step 1/1. Functionally, catalyzes the reversible interconversion of serine and glycine with tetrahydrofolate (THF) serving as the one-carbon carrier. This reaction serves as the major source of one-carbon groups required for the biosynthesis of purines, thymidylate, methionine, and other important biomolecules. Also exhibits THF-independent aldolase activity toward beta-hydroxyamino acids, producing glycine and aldehydes, via a retro-aldol mechanism. This chain is Serine hydroxymethyltransferase, found in Paracoccus denitrificans (strain Pd 1222).